Consider the following 371-residue polypeptide: Aspartate-semialdehyde dehydrogenase (371 aa).

Residues 9–12, 37–38, and glutamine 73 contribute to the NADP(+) site; these read RGMV and TS. Arginine 102 lines the phosphate pocket. Cysteine 135 serves as the catalytic Acyl-thioester intermediate. Glutamine 162 provides a ligand contact to substrate. Residues 165–166 and proline 193 contribute to the NADP(+) site; that span reads SG. Glutamate 241 is a substrate binding site. Lysine 244 provides a ligand contact to phosphate. Position 268 (arginine 268) interacts with substrate. Histidine 275 acts as the Proton acceptor in catalysis. Glutamine 351 provides a ligand contact to NADP(+).

This sequence belongs to the aspartate-semialdehyde dehydrogenase family. In terms of assembly, homodimer.

It catalyses the reaction L-aspartate 4-semialdehyde + phosphate + NADP(+) = 4-phospho-L-aspartate + NADPH + H(+). Its pathway is amino-acid biosynthesis; L-lysine biosynthesis via DAP pathway; (S)-tetrahydrodipicolinate from L-aspartate: step 2/4. The protein operates within amino-acid biosynthesis; L-methionine biosynthesis via de novo pathway; L-homoserine from L-aspartate: step 2/3. It functions in the pathway amino-acid biosynthesis; L-threonine biosynthesis; L-threonine from L-aspartate: step 2/5. Its function is as follows. Catalyzes the NADPH-dependent formation of L-aspartate-semialdehyde (L-ASA) by the reductive dephosphorylation of L-aspartyl-4-phosphate. This is Aspartate-semialdehyde dehydrogenase from Neisseria meningitidis serogroup A / serotype 4A (strain DSM 15465 / Z2491).